The primary structure comprises 405 residues: Glutathione S-transferase LANCL1 (405 aa).

Cys-282 lines the Zn(2+) pocket. Glutathione is bound at residue Lys-323. Cys-328 and His-329 together coordinate Zn(2+). Residue 370-373 (RTPD) coordinates glutathione.

This sequence belongs to the LanC-like protein family.

It localises to the cytoplasm. Its subcellular location is the cell membrane. It carries out the reaction RX + glutathione = an S-substituted glutathione + a halide anion + H(+). The catalysed reaction is 1-chloro-2,4-dinitrobenzene + glutathione = 2,4-dinitrophenyl-S-glutathione + chloride + H(+). Functionally, functions as a glutathione transferase. Catalyzes conjugation of the glutathione (GSH) to artificial substrates 1-chloro-2,4-dinitrobenzene (CDNB) and p-nitrophenyl acetate. Binds glutathione. The polypeptide is Glutathione S-transferase LANCL1 (Danio rerio (Zebrafish)).